Reading from the N-terminus, the 350-residue chain is MTDQPQQLTIRRPDDWHIHLRDGEMLEAVAPFTSEICGRAIVMPNLVPPVTSVAAARAYRERIVAAVPAAHDFTPLMTCYLTDGLDPDEIEAGFAEGVFTAAKLYPAHATTNSAHGVTSIASIAKVLERMQKIGMPLLIHGEVTDAHIDIFDREARFIETVLHPLRQQFPELKVVCEHITTQEAAAYVLEGNQYLAATITPQHLMFNRNHMLVGGIRPHLYCLPILKRNIHQQALRDAVASGHRRFFLGTDTAPHTRDRKETSCGCAGVFNAPSMLSAYATVFEEIGALAHFEAFCSENGPGFYGLPLNEDKVRLIRQPWTVPESIRVGGNGDNLVPFLAGETLNWQVVL.

Histidine 17 and histidine 19 together coordinate Zn(2+). Substrate is bound by residues 19 to 21 (HLR) and asparagine 45. 3 residues coordinate Zn(2+): lysine 103, histidine 140, and histidine 178. Residue lysine 103 is modified to N6-carboxylysine. A substrate-binding site is contributed by histidine 140. Position 223 (leucine 223) interacts with substrate. A Zn(2+)-binding site is contributed by aspartate 251. Aspartate 251 is an active-site residue. Substrate-binding residues include histidine 255 and alanine 267.

It belongs to the metallo-dependent hydrolases superfamily. DHOase family. Class II DHOase subfamily. Homodimer. Requires Zn(2+) as cofactor.

It catalyses the reaction (S)-dihydroorotate + H2O = N-carbamoyl-L-aspartate + H(+). It participates in pyrimidine metabolism; UMP biosynthesis via de novo pathway; (S)-dihydroorotate from bicarbonate: step 3/3. Its function is as follows. Catalyzes the reversible cyclization of carbamoyl aspartate to dihydroorotate. This is Dihydroorotase from Erwinia tasmaniensis (strain DSM 17950 / CFBP 7177 / CIP 109463 / NCPPB 4357 / Et1/99).